The sequence spans 395 residues: Tryptophan synthase beta chain (395 aa).

N6-(pyridoxal phosphate)lysine is present on Lys89.

This sequence belongs to the TrpB family. In terms of assembly, tetramer of two alpha and two beta chains. Pyridoxal 5'-phosphate is required as a cofactor.

It catalyses the reaction (1S,2R)-1-C-(indol-3-yl)glycerol 3-phosphate + L-serine = D-glyceraldehyde 3-phosphate + L-tryptophan + H2O. The protein operates within amino-acid biosynthesis; L-tryptophan biosynthesis; L-tryptophan from chorismate: step 5/5. Functionally, the beta subunit is responsible for the synthesis of L-tryptophan from indole and L-serine. The sequence is that of Tryptophan synthase beta chain from Fusobacterium nucleatum subsp. nucleatum (strain ATCC 25586 / DSM 15643 / BCRC 10681 / CIP 101130 / JCM 8532 / KCTC 2640 / LMG 13131 / VPI 4355).